Reading from the N-terminus, the 467-residue chain is Coiled-coil domain-containing protein 71 (467 aa).

The interval 81–105 (PSQTKLQARAPNPTATSPPASAPRT) is disordered. Over residues 88–105 (ARAPNPTATSPPASAPRT) the composition is skewed to low complexity. Serine 129 is modified (phosphoserine). Disordered stretches follow at residues 211 to 280 (KLRK…GTKT) and 349 to 416 (VRAK…KAWL). The segment covering 253–265 (GHQSKTNRATGSP) has biased composition (polar residues). The stretch at 279–359 (KTAQAKVART…RAKAKVARTQ (81 aa)) forms a coiled coil. A compositionally biased stretch (basic residues) spans 349–380 (VRAKAKVARTQPRGRGRPKGSAKARTTRKGQK). The span at 392–401 (RAEEAKDLPP) shows a compositional bias: basic and acidic residues.

The protein is Coiled-coil domain-containing protein 71 (CCDC71) of Homo sapiens (Human).